Reading from the N-terminus, the 166-residue chain is NADH-quinone oxidoreductase subunit A (166 aa).

3 helical membrane passes run phenylalanine 16–phenylalanine 36, phenylalanine 68–tryptophan 88, and isoleucine 98–valine 118. The disordered stretch occupies residues arginine 141–arginine 166.

It belongs to the complex I subunit 3 family. NDH-1 is composed of 13 different subunits. Subunits NuoA, H, J, K, L, M, N constitute the membrane sector of the complex.

The protein localises to the cell inner membrane. It carries out the reaction a quinone + NADH + 5 H(+)(in) = a quinol + NAD(+) + 4 H(+)(out). NDH-1 shuttles electrons from NADH, via FMN and iron-sulfur (Fe-S) centers, to quinones in the respiratory chain. The immediate electron acceptor for the enzyme in this species is believed to be ubiquinone. Couples the redox reaction to proton translocation (for every two electrons transferred, four hydrogen ions are translocated across the cytoplasmic membrane), and thus conserves the redox energy in a proton gradient. This is NADH-quinone oxidoreductase subunit A from Yersinia pseudotuberculosis serotype IB (strain PB1/+).